A 286-amino-acid polypeptide reads, in one-letter code: 33 kDa chaperonin (286 aa).

2 disulfides stabilise this stretch: cysteine 225-cysteine 227 and cysteine 258-cysteine 261.

Belongs to the HSP33 family. Under oxidizing conditions two disulfide bonds are formed involving the reactive cysteines. Under reducing conditions zinc is bound to the reactive cysteines and the protein is inactive.

The protein localises to the cytoplasm. Redox regulated molecular chaperone. Protects both thermally unfolding and oxidatively damaged proteins from irreversible aggregation. Plays an important role in the bacterial defense system toward oxidative stress. The protein is 33 kDa chaperonin of Shewanella sp. (strain ANA-3).